Consider the following 194-residue polypeptide: A-type ATP synthase subunit E (194 aa).

The tract at residues D35 to E56 is disordered. Basic and acidic residues predominate over residues D41–E56.

Belongs to the V-ATPase E subunit family. As to quaternary structure, has multiple subunits with at least A(3), B(3), C, D, E, F, H, I and proteolipid K(x).

The protein resides in the cell membrane. Its function is as follows. Component of the A-type ATP synthase that produces ATP from ADP in the presence of a proton gradient across the membrane. The polypeptide is A-type ATP synthase subunit E (Haloarcula marismortui (strain ATCC 43049 / DSM 3752 / JCM 8966 / VKM B-1809) (Halobacterium marismortui)).